Consider the following 220-residue polypeptide: Tumor protein p53-inducible nuclear protein 2 (220 aa).

Low complexity predominate over residues 1-12 (MFQRLSSLFFST). Disordered stretches follow at residues 1–24 (MFQR…CPRA), 41–69 (PDSY…LMDE), and 119–220 (PGSP…QFNY). Serine 14 bears the Phosphoserine mark. Residues 26–41 (VSEEDEVDGWLIIDLP) carry the LIR motif. Residues 47-64 (PPSPGAAPAPAGRPPPAP) are compositionally biased toward pro residues. Position 136 is a phosphoserine (serine 136). Low complexity predominate over residues 152–170 (HAAPLPARAALLEKAGQVR). The segment covering 205–220 (NQSSFIYQPCQRQFNY) has biased composition (polar residues).

Interacts with VMP1, GABARAP, GABARAPL1, GABARAPL2, MAP1LC3A, MAP1LC3B, MAP1LC3C and THRA.

It localises to the cytoplasm. Its subcellular location is the cytosol. The protein resides in the nucleus. The protein localises to the PML body. It is found in the cytoplasmic vesicle. It localises to the autophagosome. Its function is as follows. Dual regulator of transcription and autophagy. Positively regulates autophagy and is required for autophagosome formation and processing. May act as a scaffold protein that recruits MAP1LC3A, GABARAP and GABARAPL2 and brings them to the autophagosome membrane by interacting with VMP1 where, in cooperation with the BECN1-PI3-kinase class III complex, they trigger autophagosome development. Acts as a transcriptional activator of THRA. This chain is Tumor protein p53-inducible nuclear protein 2 (TP53INP2), found in Homo sapiens (Human).